The sequence spans 202 residues: Imidazoleglycerol-phosphate dehydratase (202 aa).

This sequence belongs to the imidazoleglycerol-phosphate dehydratase family.

Its subcellular location is the cytoplasm. The enzyme catalyses D-erythro-1-(imidazol-4-yl)glycerol 3-phosphate = 3-(imidazol-4-yl)-2-oxopropyl phosphate + H2O. It participates in amino-acid biosynthesis; L-histidine biosynthesis; L-histidine from 5-phospho-alpha-D-ribose 1-diphosphate: step 6/9. The polypeptide is Imidazoleglycerol-phosphate dehydratase (Acinetobacter baumannii (strain AYE)).